The primary structure comprises 361 residues: Phosphoserine aminotransferase (361 aa).

L-glutamate is bound at residue Arg-43. Residues 77-78 (AS), Trp-103, Thr-153, Asp-173, and Gln-196 contribute to the pyridoxal 5'-phosphate site. N6-(pyridoxal phosphate)lysine is present on Lys-197. Pyridoxal 5'-phosphate is bound at residue 238-239 (NT).

This sequence belongs to the class-V pyridoxal-phosphate-dependent aminotransferase family. SerC subfamily. As to quaternary structure, homodimer. Pyridoxal 5'-phosphate is required as a cofactor.

It is found in the cytoplasm. It catalyses the reaction O-phospho-L-serine + 2-oxoglutarate = 3-phosphooxypyruvate + L-glutamate. It carries out the reaction 4-(phosphooxy)-L-threonine + 2-oxoglutarate = (R)-3-hydroxy-2-oxo-4-phosphooxybutanoate + L-glutamate. Its pathway is amino-acid biosynthesis; L-serine biosynthesis; L-serine from 3-phospho-D-glycerate: step 2/3. Functionally, catalyzes the reversible conversion of 3-phosphohydroxypyruvate to phosphoserine and of 3-hydroxy-2-oxo-4-phosphonooxybutanoate to phosphohydroxythreonine. The protein is Phosphoserine aminotransferase of Bacillus anthracis (strain A0248).